Reading from the N-terminus, the 263-residue chain is uncharacterized protein (263 aa).

31 to 38 (GPTGSGKT) lines the ATP pocket.

The protein belongs to the CbbQ/NirQ/NorQ/GpvN family.

This is an uncharacterized protein from Staphylococcus aureus (strain USA300).